The following is a 209-amino-acid chain: Ras-like GTP-binding protein RYL2 (209 aa).

12–19 (GAQGVGKT) serves as a coordination point for GTP. An Effector region motif is present at residues 34-42 (QASTIGASF). GTP is bound by residues 60–64 (DTAGQ) and 118–121 (TKVD). S-geranylgeranyl cysteine attachment occurs at residues C208 and C209.

The protein belongs to the small GTPase superfamily. Rab family.

Its subcellular location is the cell membrane. Functionally, protein transport. Probably involved in vesicular traffic. In Yarrowia lipolytica (strain CLIB 122 / E 150) (Yeast), this protein is Ras-like GTP-binding protein RYL2 (RYL2).